The following is a 1134-amino-acid chain: Phospholipid-transporting ATPase IH (1134 aa).

Topologically, residues Met1 to Ile61 are cytoplasmic. The helical transmembrane segment at Pro62–Leu82 threads the bilayer. At Val83–Asp88 the chain is on the extracellular side. The helical transmembrane segment at Thr89–Lys110 threads the bilayer. The Cytoplasmic segment spans residues Gln111–Phe296. Residues Leu297 to Trp318 form a helical membrane-spanning segment. Topologically, residues Gln319 to Phe349 are extracellular. A helical transmembrane segment spans residues Leu350–Lys372. Over Phe373–Glu881 the chain is Cytoplasmic. Asp414 serves as the catalytic 4-aspartylphosphate intermediate. The ATP site is built by Asp414, Lys415, Thr416, Glu511, Phe553, Lys576, Arg607, Thr687, Gly688, and Asp689. Asp414 is a binding site for Mg(2+). Residue Thr416 coordinates Mg(2+). Ser738 carries the phosphoserine modification. ATP contacts are provided by Arg798 and Lys804. A Mg(2+)-binding site is contributed by Asp825. The ATP site is built by Asn828 and Asp829. Asp829 contacts Mg(2+). A helical transmembrane segment spans residues Leu882–Phe902. At Phe903–Thr914 the chain is on the extracellular side. Residues Ala915–Leu934 form a helical membrane-spanning segment. Residues Met935–Val964 lie on the Cytoplasmic side of the membrane. The chain crosses the membrane as a helical span at residues Phe965–Val986. The Extracellular portion of the chain corresponds to Phe987–Gly1000. The helical transmembrane segment at Asn1001–Asp1023 threads the bilayer. Topologically, residues Thr1024–Trp1029 are cytoplasmic. The chain crosses the membrane as a helical span at residues Ile1030–Gly1050. Residues Gly1051–Gln1068 lie on the Extracellular side of the membrane. The helical transmembrane segment at Met1069 to Lys1093 threads the bilayer. The Cytoplasmic portion of the chain corresponds to Lys1094–Phe1134.

The protein belongs to the cation transport ATPase (P-type) (TC 3.A.3) family. Type IV subfamily. Component of a P4-ATPase flippase complex which consists of a catalytic alpha subunit ATP11A and an accessory beta subunit TMEM30A. The cofactor is Mg(2+). Post-translationally, proteolytically cleaved by CASP3. As to expression, widely expressed. Expressed in myoblasts.

Its subcellular location is the cell membrane. The protein resides in the early endosome. The protein localises to the recycling endosome. It is found in the endoplasmic reticulum membrane. The catalysed reaction is ATP + H2O + phospholipidSide 1 = ADP + phosphate + phospholipidSide 2.. It catalyses the reaction a 1,2-diacyl-sn-glycero-3-phospho-L-serine(out) + ATP + H2O = a 1,2-diacyl-sn-glycero-3-phospho-L-serine(in) + ADP + phosphate + H(+). The enzyme catalyses a 1,2-diacyl-sn-glycero-3-phosphoethanolamine(out) + ATP + H2O = a 1,2-diacyl-sn-glycero-3-phosphoethanolamine(in) + ADP + phosphate + H(+). The flippase activity is inactivated by caspase-mediated cleavage in apoptotic cells, allowing for PS exposure on the cell surface and engulfment of apoptotic cells by macrophages. The ATPase activity is up-regulated by aminophospholipids PS and PE and down-regulated by increasing intracellular Ca2+ levels. In terms of biological role, catalytic component of a P4-ATPase flippase complex which catalyzes the hydrolysis of ATP coupled to the transport of aminophospholipids, phosphatidylserines (PS) and phosphatidylethanolamines (PE), from the outer to the inner leaflet of the plasma membrane. Does not show flippase activity toward phosphatidylcholine (PC). Contributes to the maintenance of membrane lipid asymmetry with a specific role in morphogenesis of muscle cells. In myoblasts, mediates PS enrichment at the inner leaflet of plasma membrane, triggering PIEZO1-dependent Ca2+ influx and Rho GTPases signal transduction, subsequently leading to the assembly of cortical actomyosin fibers and myotube formation. May be involved in the uptake of farnesyltransferase inhibitor drugs, such as lonafarnib. The protein is Phospholipid-transporting ATPase IH (ATP11A) of Homo sapiens (Human).